Consider the following 595-residue polypeptide: Phytoene desaturase (595 aa).

An N-terminal signal peptide occupies residues 1 to 23 (MAETQRPRSAIIVGAGAGGIAVA). The chain crosses the membrane as a helical span at residues 574 to 594 (SQRAFPLLVALMGVLYFLLFV).

Belongs to the carotenoid/retinoid oxidoreductase family. NAD(+) serves as cofactor.

It localises to the membrane. The catalysed reaction is 15-cis-phytoene + A = all-trans-phytofluene + AH2. It carries out the reaction all-trans-phytofluene + A = all-trans-zeta-carotene + AH2. It catalyses the reaction all-trans-zeta-carotene + A = all-trans-neurosporene + AH2. The enzyme catalyses all-trans-neurosporene + A = all-trans-lycopene + AH2. The catalysed reaction is all-trans-lycopene + A = all-trans-3,4-didehydrolycopene + AH2. The protein operates within carotenoid biosynthesis; lycopene biosynthesis. In terms of biological role, phytoene desaturase involved in the carotenoid biosynthesis pathway. Converts phytoene into 3,4-didehydrolycopene via the intermediates phytofluene, zeta-carotene, neurosporene and lycopene, by introducing up to five double bonds into phytoene. Is also able to desaturate 1-hydroxyneurosporene into 1-hydroxylycopene and 1-hydroxylycopene into 1-hydroxy-3,4-didehydrolycopene. Gamma-carotene and 1,19-dihydroxylycopene are not accepted as substrates. Neurosporaxanthin is synthesized from geranyl-geranyl pyrophosphate (GGPP) through several enzymatic activities. Phytoene synthase activity performed by the bifunctional enzyme al-2 first produces phytoene from geranyl-geranyl pyrophosphate (GGPP). The phytoene dehydrogenase al-1 then introduces 5 desaturations to lead to 3,4-didehydrolycopene via the intermediates phytofluene, zeta-carotene, neurosporene and lycopene. Al-2 cyclase activity then converts 3,4-didehydrolycopene into torulene. Al-2 can also convet lycopene into gamma-carotene which in turn is converted to beta-carotene by an additional al-2 cyclization reaction. Torulene is the substrate of the dioxidase cao-2 that breaks the molecule, removing five carbon atoms to yield beta-apo-4'-carotenal, whereas the aldehyde dehydrogenase ylo-1 mediates the last step by converting beta-apo-4'-carotenal into neurosporaxanthin. The sequence is that of Phytoene desaturase from Neurospora crassa (strain ATCC 24698 / 74-OR23-1A / CBS 708.71 / DSM 1257 / FGSC 987).